The primary structure comprises 354 residues: NADH-quinone oxidoreductase subunit H (354 aa).

A run of 8 helical transmembrane segments spans residues Leu25–Trp45, Trp91–Ile111, Leu126–Ala146, Met170–Val190, Phe205–Ile225, Leu257–Phe277, Phe290–Trp310, and Val330–Leu350.

The protein belongs to the complex I subunit 1 family. NDH-1 is composed of 14 different subunits. Subunits NuoA, H, J, K, L, M, N constitute the membrane sector of the complex.

It is found in the cell inner membrane. The enzyme catalyses a quinone + NADH + 5 H(+)(in) = a quinol + NAD(+) + 4 H(+)(out). In terms of biological role, NDH-1 shuttles electrons from NADH, via FMN and iron-sulfur (Fe-S) centers, to quinones in the respiratory chain. The immediate electron acceptor for the enzyme in this species is believed to be ubiquinone. Couples the redox reaction to proton translocation (for every two electrons transferred, four hydrogen ions are translocated across the cytoplasmic membrane), and thus conserves the redox energy in a proton gradient. This subunit may bind ubiquinone. This chain is NADH-quinone oxidoreductase subunit H, found in Paraburkholderia phymatum (strain DSM 17167 / CIP 108236 / LMG 21445 / STM815) (Burkholderia phymatum).